The chain runs to 1057 residues: Adenylate-forming reductase stbB (1057 aa).

The interval serine 21–glutamate 378 is adenylation (A) domain. AMP contacts are provided by residues histidine 251, asparagine 344 to phenylalanine 345, threonine 349, and alanine 423 to arginine 426. The 88-residue stretch at glutamate 564 to serine 651 folds into the Carrier domain. Residue serine 600 is modified to O-(pantetheine 4'-phosphoryl)serine. Residues isoleucine 693 to valine 1025 form a reductase (R) domain region. NADP(+) contacts are provided by residues serine 700–leucine 703, alanine 783–tryptophan 785, tyrosine 858, and lysine 862.

It belongs to the adenylate-forming reductase family.

The catalysed reaction is ilicicolinate B + AH2 + ATP = ilicicolin B + A + AMP + diphosphate. Its pathway is secondary metabolite biosynthesis; terpenoid biosynthesis. Its function is as follows. Nonribosomal peptide synthase-like protein; part of the cluster that mediates the biosynthesis of LL-Z1272-beta, also known as ilicicolin B, a prenylated aryl-aldehyde produced by several fungi and that serves as a key pathway intermediate for many fungal meroterpenoids. The first step in the pathway is performed by the non-reducing polyketide synthase stbA that produces orsellinic acid by condensing acetyl-CoA with 3 malonyl-CoA units. The prenyltransferase stbC then prenylates orsenilic acid into grifolic acid. Finally, grifolic acid is reduced to ilicicolin B by the NRPS-like protein stbB. This chain is Adenylate-forming reductase stbB, found in Stachybotrys bisbyi (Hyalostachybotrys bisbyi).